We begin with the raw amino-acid sequence, 288 residues long: Eukaryotic translation initiation factor 3 subunit G (288 aa).

The tract at residues 1–35 is disordered; it reads MSRVANNRDWADDEDLEDSNELPQSTTTTNKDGTQ. The span at 11 to 20 shows a compositional bias: acidic residues; sequence ADDEDLEDSN. Residues 21–35 are compositionally biased toward polar residues; it reads ELPQSTTTTNKDGTQ. Positions 208-286 constitute an RRM domain; that stretch reads ATLRVTNVSE…LILRVEFAKK (79 aa).

This sequence belongs to the eIF-3 subunit G family. In terms of assembly, component of the eukaryotic translation initiation factor 3 (eIF-3) complex.

It localises to the cytoplasm. Functionally, RNA-binding component of the eukaryotic translation initiation factor 3 (eIF-3) complex, which is involved in protein synthesis of a specialized repertoire of mRNAs and, together with other initiation factors, stimulates binding of mRNA and methionyl-tRNAi to the 40S ribosome. The eIF-3 complex specifically targets and initiates translation of a subset of mRNAs involved in cell proliferation. This subunit can bind 18S rRNA. This Botryotinia fuckeliana (strain B05.10) (Noble rot fungus) protein is Eukaryotic translation initiation factor 3 subunit G (tif35).